The sequence spans 410 residues: F-box protein At3g61340 (410 aa).

Residues 17-66 (EEKSERIPFDLVIEILLRLPVKSIARFRYVSKLWQSTLRGQHFTESYLTI) enclose the F-box domain.

The polypeptide is F-box protein At3g61340 (Arabidopsis thaliana (Mouse-ear cress)).